Here is a 485-residue protein sequence, read N- to C-terminus: ATP synthase subunit beta, cyanelle (485 aa).

162-169 contacts ATP; that stretch reads GGAGVGKT.

The protein belongs to the ATPase alpha/beta chains family. In terms of assembly, F-type ATPases have 2 components, CF(1) - the catalytic core - and CF(0) - the membrane proton channel. CF(1) has five subunits: alpha(3), beta(3), gamma(1), delta(1), epsilon(1). CF(0) has four main subunits: a(1), b(1), b'(1) and c(9-12).

It localises to the plastid. It is found in the cyanelle thylakoid membrane. It catalyses the reaction ATP + H2O + 4 H(+)(in) = ADP + phosphate + 5 H(+)(out). Produces ATP from ADP in the presence of a proton gradient across the membrane. The catalytic sites are hosted primarily by the beta subunits. The protein is ATP synthase subunit beta, cyanelle of Cyanophora paradoxa.